Reading from the N-terminus, the 154-residue chain is Ribosome maturation factor RimP (154 aa).

This sequence belongs to the RimP family.

Its subcellular location is the cytoplasm. Required for maturation of 30S ribosomal subunits. This is Ribosome maturation factor RimP from Haemophilus ducreyi (strain 35000HP / ATCC 700724).